A 291-amino-acid chain; its full sequence is Phosphatidylserine decarboxylase proenzyme (291 aa).

Active-site charge relay system; for autoendoproteolytic cleavage activity residues include Asp93, His150, and Ser253. Ser253 serves as the catalytic Schiff-base intermediate with substrate; via pyruvic acid; for decarboxylase activity. Pyruvic acid (Ser); by autocatalysis is present on Ser253.

This sequence belongs to the phosphatidylserine decarboxylase family. PSD-B subfamily. Prokaryotic type I sub-subfamily. Heterodimer of a large membrane-associated beta subunit and a small pyruvoyl-containing alpha subunit. Pyruvate serves as cofactor. Post-translationally, is synthesized initially as an inactive proenzyme. Formation of the active enzyme involves a self-maturation process in which the active site pyruvoyl group is generated from an internal serine residue via an autocatalytic post-translational modification. Two non-identical subunits are generated from the proenzyme in this reaction, and the pyruvate is formed at the N-terminus of the alpha chain, which is derived from the carboxyl end of the proenzyme. The autoendoproteolytic cleavage occurs by a canonical serine protease mechanism, in which the side chain hydroxyl group of the serine supplies its oxygen atom to form the C-terminus of the beta chain, while the remainder of the serine residue undergoes an oxidative deamination to produce ammonia and the pyruvoyl prosthetic group on the alpha chain. During this reaction, the Ser that is part of the protease active site of the proenzyme becomes the pyruvoyl prosthetic group, which constitutes an essential element of the active site of the mature decarboxylase.

The protein localises to the cell membrane. It catalyses the reaction a 1,2-diacyl-sn-glycero-3-phospho-L-serine + H(+) = a 1,2-diacyl-sn-glycero-3-phosphoethanolamine + CO2. It participates in phospholipid metabolism; phosphatidylethanolamine biosynthesis; phosphatidylethanolamine from CDP-diacylglycerol: step 2/2. Catalyzes the formation of phosphatidylethanolamine (PtdEtn) from phosphatidylserine (PtdSer). The polypeptide is Phosphatidylserine decarboxylase proenzyme (Alcanivorax borkumensis (strain ATCC 700651 / DSM 11573 / NCIMB 13689 / SK2)).